Consider the following 394-residue polypeptide: Phosphopentomutase (394 aa).

Mn(2+)-binding residues include aspartate 13, aspartate 286, histidine 291, aspartate 327, histidine 328, and histidine 339.

This sequence belongs to the phosphopentomutase family. The cofactor is Mn(2+).

Its subcellular location is the cytoplasm. It carries out the reaction 2-deoxy-alpha-D-ribose 1-phosphate = 2-deoxy-D-ribose 5-phosphate. The catalysed reaction is alpha-D-ribose 1-phosphate = D-ribose 5-phosphate. Its pathway is carbohydrate degradation; 2-deoxy-D-ribose 1-phosphate degradation; D-glyceraldehyde 3-phosphate and acetaldehyde from 2-deoxy-alpha-D-ribose 1-phosphate: step 1/2. Its function is as follows. Isomerase that catalyzes the conversion of deoxy-ribose 1-phosphate (dRib-1-P) and ribose 1-phosphate (Rib-1-P) to deoxy-ribose 5-phosphate (dRib-5-P) and ribose 5-phosphate (Rib-5-P), respectively. The chain is Phosphopentomutase from Bacillus cereus (strain AH187).